Reading from the N-terminus, the 380-residue chain is Cytochrome b (380 aa).

The next 4 membrane-spanning stretches (helical) occupy residues 34-54 (FGSL…LLAM), 78-99 (WLIR…YLHI), 114-134 (WNTG…GYVL), and 179-199 (FFAL…IHLT). Heme b contacts are provided by H84 and H98. Heme b contacts are provided by H183 and H197. A ubiquinone is bound at residue H202. The next 4 helical transmembrane spans lie at 227–247 (LKDI…ALFS), 289–309 (LGGV…PFLH), 321–341 (LSQL…WVGS), and 348–368 (FIII…ILFP).

Belongs to the cytochrome b family. In terms of assembly, the cytochrome bc1 complex contains 11 subunits: 3 respiratory subunits (MT-CYB, CYC1 and UQCRFS1), 2 core proteins (UQCRC1 and UQCRC2) and 6 low-molecular weight proteins (UQCRH/QCR6, UQCRB/QCR7, UQCRQ/QCR8, UQCR10/QCR9, UQCR11/QCR10 and a cleavage product of UQCRFS1). This cytochrome bc1 complex then forms a dimer. Requires heme b as cofactor.

The protein localises to the mitochondrion inner membrane. Component of the ubiquinol-cytochrome c reductase complex (complex III or cytochrome b-c1 complex) that is part of the mitochondrial respiratory chain. The b-c1 complex mediates electron transfer from ubiquinol to cytochrome c. Contributes to the generation of a proton gradient across the mitochondrial membrane that is then used for ATP synthesis. The polypeptide is Cytochrome b (MT-CYB) (Macronectes halli (Hall's giant petrel)).